Here is a 1357-residue protein sequence, read N- to C-terminus: DNA-directed RNA polymerase subunit beta (1357 aa).

It belongs to the RNA polymerase beta chain family. The RNAP catalytic core consists of 2 alpha, 1 beta, 1 beta' and 1 omega subunit. When a sigma factor is associated with the core the holoenzyme is formed, which can initiate transcription.

It carries out the reaction RNA(n) + a ribonucleoside 5'-triphosphate = RNA(n+1) + diphosphate. DNA-dependent RNA polymerase catalyzes the transcription of DNA into RNA using the four ribonucleoside triphosphates as substrates. The protein is DNA-directed RNA polymerase subunit beta of Pseudomonas fluorescens (strain Pf0-1).